Here is a 157-residue protein sequence, read N- to C-terminus: 2-C-methyl-D-erythritol 2,4-cyclodiphosphate synthase (157 aa).

A divalent metal cation-binding residues include Asp-8 and His-10. 4-CDP-2-C-methyl-D-erythritol 2-phosphate is bound by residues 8–10 and 34–35; these read DIH and HS. Residue His-42 coordinates a divalent metal cation. 4-CDP-2-C-methyl-D-erythritol 2-phosphate contacts are provided by residues 56–58, 61–65, 132–135, and Arg-142; these read DIG, FPDTD, and TTNE.

This sequence belongs to the IspF family. Homotrimer. A divalent metal cation serves as cofactor.

The catalysed reaction is 4-CDP-2-C-methyl-D-erythritol 2-phosphate = 2-C-methyl-D-erythritol 2,4-cyclic diphosphate + CMP. It functions in the pathway isoprenoid biosynthesis; isopentenyl diphosphate biosynthesis via DXP pathway; isopentenyl diphosphate from 1-deoxy-D-xylulose 5-phosphate: step 4/6. Functionally, involved in the biosynthesis of isopentenyl diphosphate (IPP) and dimethylallyl diphosphate (DMAPP), two major building blocks of isoprenoid compounds. Catalyzes the conversion of 4-diphosphocytidyl-2-C-methyl-D-erythritol 2-phosphate (CDP-ME2P) to 2-C-methyl-D-erythritol 2,4-cyclodiphosphate (ME-CPP) with a corresponding release of cytidine 5-monophosphate (CMP). This Chloroherpeton thalassium (strain ATCC 35110 / GB-78) protein is 2-C-methyl-D-erythritol 2,4-cyclodiphosphate synthase.